The primary structure comprises 270 residues: MNKPFDKLKLHGFNNLTKSLSFSIYDICYAKTEQQRKEYIEYIDEQYSADRLTDILGEVVDIIGANILNVARQDYEPQGASVTILVSEEPVEEQQNYDADEAPGPLPDSVVAHLDKSHICVHTYPEAHPDDGICTFRADIEVSTCGIISPLKALNFLIHSLESDVVTIDYRVRGFTRDINGVKHYIDHAISSIQNFMTEDTKEAYQMMDVNVYQENLFHTKMMLKETDLNTYLFGLSTDDLSDEEEEEIRSKLTREMQEIFYGRNLPDLD.

Residue S117 is the Schiff-base intermediate with substrate; via pyruvic acid of the active site. S117 is modified (pyruvic acid (Ser); by autocatalysis). Catalysis depends on H122, which acts as the Proton acceptor; for processing activity. Residue C145 is the Proton donor; for catalytic activity of the active site.

This sequence belongs to the prokaryotic AdoMetDC family. Type 2 subfamily. In terms of assembly, heterooctamer of four alpha and four beta chains arranged as a tetramer of alpha/beta heterodimers. The cofactor is pyruvate. Is synthesized initially as an inactive proenzyme. Formation of the active enzyme involves a self-maturation process in which the active site pyruvoyl group is generated from an internal serine residue via an autocatalytic post-translational modification. Two non-identical subunits are generated from the proenzyme in this reaction, and the pyruvate is formed at the N-terminus of the alpha chain, which is derived from the carboxyl end of the proenzyme. The post-translation cleavage follows an unusual pathway, termed non-hydrolytic serinolysis, in which the side chain hydroxyl group of the serine supplies its oxygen atom to form the C-terminus of the beta chain, while the remainder of the serine residue undergoes an oxidative deamination to produce ammonia and the pyruvoyl group blocking the N-terminus of the alpha chain.

It carries out the reaction S-adenosyl-L-methionine + H(+) = S-adenosyl 3-(methylsulfanyl)propylamine + CO2. It functions in the pathway amine and polyamine biosynthesis; S-adenosylmethioninamine biosynthesis; S-adenosylmethioninamine from S-adenosyl-L-methionine: step 1/1. Catalyzes the decarboxylation of S-adenosylmethionine to S-adenosylmethioninamine (dcAdoMet), the propylamine donor required for the synthesis of the polyamines spermine and spermidine from the diamine putrescine. This Pseudoalteromonas translucida (strain TAC 125) protein is S-adenosylmethionine decarboxylase proenzyme.